The sequence spans 82 residues: Small ribosomal subunit protein bS16 (82 aa).

The protein belongs to the bacterial ribosomal protein bS16 family.

This chain is Small ribosomal subunit protein bS16, found in Pasteurella multocida (strain Pm70).